Consider the following 644-residue polypeptide: uncharacterized protein (644 aa).

A helical membrane pass occupies residues 16–38; it reads LLSYLGVVGVGIAGLCIYRSVWG. A compositionally biased stretch (basic and acidic residues) spans 586-603; it reads VRQLQKEAGEGEAEEHPR. Residues 586 to 613 are disordered; that stretch reads VRQLQKEAGEGEAEEHPRARPAAGKAQR.

Its subcellular location is the membrane. This is an uncharacterized protein from Treponema pallidum (strain Nichols).